Consider the following 407-residue polypeptide: NADH dehydrogenase [ubiquinone] 1 alpha subcomplex subunit 10, mitochondrial (407 aa).

Residues methionine 1 to lysine 60 constitute a mitochondrion transit peptide.

This sequence belongs to the complex I NDUFA10 subunit family. In terms of assembly, complex I is composed of 45 different subunits. This a component of the hydrophobic protein fraction. Forms a complex including sicily, ND-42 and Hsp83; the complex is necessary to chaperone ND-42 in the cytoplasm before mitochondrial import; the interaction between sicily and ND-42 is direct and occurs preferably between the unprocessed forms in the cytoplasm. The cofactor is FAD. Expressed in muscles (at protein level).

It is found in the mitochondrion matrix. The protein localises to the cytoplasm. In terms of biological role, accessory subunit of the mitochondrial membrane respiratory chain NADH dehydrogenase (Complex I), that is believed not to be involved in catalysis. Complex I functions in the transfer of electrons from NADH to the respiratory chain. The immediate electron acceptor for the enzyme is believed to be ubiquinone. This Drosophila melanogaster (Fruit fly) protein is NADH dehydrogenase [ubiquinone] 1 alpha subcomplex subunit 10, mitochondrial.